The chain runs to 1488 residues: Eukaryotic translation initiation factor 4G (1488 aa).

3 disordered regions span residues 196 to 320 (VQHR…GQTS), 337 to 367 (DSEK…GKSE), and 415 to 707 (THQI…MTEA). Composition is skewed to basic and acidic residues over residues 216-244 (VSEK…EKHP) and 274-299 (ADEK…RNDT). Composition is skewed to polar residues over residues 300 to 310 (KNLPQQPQSAS), 345 to 360 (SKVS…SSIS), 448 to 464 (SLAT…SFVT), and 473 to 495 (CTTS…TQTL). Residues 496-520 (SASVDASDVSEVNSGTSSESTSQST) show a composition bias toward low complexity. Residues 555 to 566 (QVKHADGAKDES) show a composition bias toward basic and acidic residues. The span at 627–646 (QEQSESVATSDGADSSSTVD) shows a compositional bias: polar residues. The segment covering 651–671 (LPEESEREVMCEDDGKKKVEP) has biased composition (basic and acidic residues). The segment covering 683 to 696 (PKLQSSDSGNQASA) has biased composition (polar residues). Residues 709 to 721 (GRKKYSRDFLLTF) form an EIF4E-binding region. Residues 753 to 784 (DREPHPSSARGSDRPTSRGDRRGPAMDDDKWL) show a composition bias toward basic and acidic residues. Disordered regions lie at residues 753–795 (DREP…PNRD), 974–1000 (RGER…EREE), and 1107–1299 (WQQR…SEEE). An MIF4G domain is found at 883–1106 (QRQLKAILNK…RDSIDLRKNK (224 aa)). Positions 978–989 (EEAEADKTEEEG) are enriched in acidic residues. Composition is skewed to basic and acidic residues over residues 990-1000 (EIKQTKEEREE), 1111-1132 (RKVD…ERHA), 1181-1191 (IRYEQERHQFD), and 1254-1267 (TRED…DRFS). Polar residues predominate over residues 1273–1294 (AAQSASSSHRPASQEGRSGNKS). The 125-residue stretch at 1299 to 1423 (ELREKSIATI…VLQDVGKLIE (125 aa)) folds into the MI domain.

It belongs to the eukaryotic initiation factor 4G family. In terms of assembly, EIF4F is a multi-subunit complex, the composition of which varies with external and internal environmental conditions. It is composed of at least EIF4A, EIF4E and EIF4G. In higher plants two isoforms of EIF4F have been identified, named isoform EIF4F and isoform EIF(iso)4F. Isoform EIF4F has subunits p220 and p26, whereas isoform EIF(iso)4F has subunits p82 and p28.

In terms of biological role, component of the protein complex eIF4F, which is involved in the recognition of the mRNA cap, ATP-dependent unwinding of 5'-terminal secondary structure and recruitment of mRNA to the ribosome. The protein is Eukaryotic translation initiation factor 4G of Triticum aestivum (Wheat).